The chain runs to 383 residues: MRSLALLCAVLALSDGITRLPLERGKKLREILREKGLLHHFLQHHRYDIGTKFPHAFPDVLTVVTEPLLNTLDMEYYGTISIGTPPQDFTVVFDTGSSNLWVPSVSCTSPACQSHQMFNPSQSSTYKSTGQNLSIHYGTGDMEGTVGCDTVTVASLMDTNQLFGLSTSEPGQFFVYVKFDGILGLGYPSLAADGITPVFDNMVNESLLEQNLFSVYLSREPMGSMVVFGGIDESYFTGSINWIPVSYQGYWQISMDSIIVNKQEIACSSGCQAIIDTGTSLVAGPASDINDIQSAVGANQNTYGEYSVNCSHILAMPDVVFVIGGIQYPVPALAYTEQNGQGTCMSSFQNSSADLWILGDVFIRVYYSIFDRANNRVGLAKAI.

The N-terminal stretch at Met-1–Gly-16 is a signal peptide. A Peptidase A1 domain is found at Tyr-76 to Ala-380. The active site involves Asp-94. Cys-107 and Cys-112 are disulfide-bonded. 2 N-linked (GlcNAc...) asparagine glycosylation sites follow: Asn-132 and Asn-204. Residues Cys-267 and Cys-271 are joined by a disulfide bond. The active site involves Asp-276. An N-linked (GlcNAc...) asparagine glycan is attached at Asn-309. Residues Cys-310 and Cys-344 are joined by a disulfide bond. Asn-350 carries N-linked (GlcNAc...) asparagine glycosylation.

The protein belongs to the peptidase A1 family.

This is Embryonic pepsinogen from Gallus gallus (Chicken).